The sequence spans 441 residues: Keratin, type I cytoskeletal 15 (441 aa).

Residues 2–91 (LLLGHASTST…GGSDLLLGTS (90 aa)) form a head region. A coil 1A region spans residues 92–127 (GKEAMQNLNDRLASYLDKVRSLEGKNHELELKIKDW). The IF rod domain maps to 92–407 (GKEAMQNLND…MLLDSEDSKG (316 aa)). Residues 128 to 149 (YSQVIPGTGGPDARDYGHLEKE) form a linker 1 region. A coil 1B region spans residues 150–241 (IEDLQNKVNN…KNHEEDMKAA (92 aa)). The segment at 242-261 (SSGIAGQVNVELDAAPGTNL) is linker 12. The interval 262 to 403 (LDELDACRRD…ATYRMLLDSE (142 aa)) is coil 2. The segment at 404 to 441 (DSKGSIINHKILTAIEKLVDGIVLSTEVLEKQIPVLSY) is tail.

It belongs to the intermediate filament family. Heterotetramer of two type I and two type II keratins. As to expression, expressed in skin.

The chain is Keratin, type I cytoskeletal 15 (KRT15) from Protopterus aethiopicus (Marbled lungfish).